Here is a 69-residue protein sequence, read N- to C-terminus: Cell division protein ZapB (69 aa).

A coiled-coil region spans residues 6 to 68; it reads LEQLEARVQS…LGKMDQMNSE (63 aa).

It belongs to the ZapB family. As to quaternary structure, homodimer. The ends of the coiled-coil dimer bind to each other, forming polymers. Interacts with FtsZ.

The protein localises to the cytoplasm. In terms of biological role, non-essential, abundant cell division factor that is required for proper Z-ring formation. It is recruited early to the divisome by direct interaction with FtsZ, stimulating Z-ring assembly and thereby promoting cell division earlier in the cell cycle. Its recruitment to the Z-ring requires functional FtsA or ZipA. The chain is Cell division protein ZapB from Tolumonas auensis (strain DSM 9187 / NBRC 110442 / TA 4).